A 147-amino-acid polypeptide reads, in one-letter code: Angiogenin (147 aa).

Residues 1-24 form the signal peptide; sequence MVMGLGVLLLVFVLGLGLTPPTLA. A Pyrrolidone carboxylic acid modification is found at Gln25. Catalysis depends on His37, which acts as the Proton acceptor. TRNA contacts are provided by Arg45 and Asp46. 3 disulfide bridges follow: Cys50–Cys105, Cys63–Cys116, and Cys81–Cys131. The Nucleolar localization signal motif lies at 55 to 59; it reads RRRGL. 2 residues coordinate tRNA: Cys105 and Val127. Residue His138 is the Proton donor of the active site.

Belongs to the pancreatic ribonuclease family. In terms of assembly, homodimer. Interacts with RNH1; inhibiting ANG ribonuclease activity. Interacts with PCNA.

The protein resides in the secreted. It localises to the nucleus. The protein localises to the nucleolus. It is found in the cytoplasm. Its subcellular location is the stress granule. Has weak tRNA ribonuclease activity by itself due to partial autoinhibition by its C-terminus, which folds into a short alpha-helix that partially occludes the substrate-binding site. In absence of stress, the ribonuclease activity is inhibited by RNH1 in the cytoplasm. In response to stress, dissociates from RNH1 in the cytoplasm and associates with cytoplasmic ribosomes with vacant A-sites: ribosomes directly activate the tRNA ribonuclease activity of ANG by refolding the C-terminal alpha-helix. In response to stress, the angiogenic activity of ANG is inhibited by RNH1 in the nucleus. Secreted ribonuclease that can either promote or restrict cell proliferation of target cells, depending on the context. Endocytosed in target cells via its receptor PLXNB2 and translocates to the cytoplasm or nucleus. Under stress conditions, localizes to the cytoplasm and promotes the assembly of stress granules (SGs): specifically cleaves a subset of tRNAs within anticodon loops to produce tRNA-derived stress-induced fragments (tiRNAs), resulting in translation repression and inhibition of cell proliferation. tiRNas also prevent formation of apoptosome, thereby promoting cell survival. Preferentially cleaves RNAs between a pyrimidine and an adenosine residue, suggesting that it cleaves the anticodon loop of tRNA(Ala) (32-UUAGCAU-38) after positions 33 and 36. Cleaves a subset of tRNAs, including tRNA(Ala), tRNA(Glu), tRNA(Gly), tRNA(Lys), tRNA(Val), tRNA(His), tRNA(Asp) and tRNA(Sec). Under growth conditions and in differentiated cells, translocates to the nucleus and stimulates ribosomal RNA (rRNA) transcription, including that containing the initiation site sequences of 45S rRNA, thereby promoting cell growth and proliferation. Angiogenin induces vascularization of normal and malignant tissues via its ability to promote rRNA transcription. Involved in hematopoietic stem and progenitor cell (HSPC) growth and survival by promoting rRNA transcription in growth conditions and inhibiting translation in response to stress, respectively. Mediates the crosstalk between myeloid and intestinal epithelial cells to protect the intestinal epithelial barrier integrity: secreted by myeloid cells and promotes intestinal epithelial cells proliferation and survival. Also mediates osteoclast-endothelial cell crosstalk in growing bone: produced by osteoclasts and protects the neighboring vascular cells against senescence by promoting rRNA transcription. This Gorilla gorilla gorilla (Western lowland gorilla) protein is Angiogenin (ANG).